The sequence spans 590 residues: Cytosolic Fe-S cluster assembly factor nar1 (590 aa).

The [4Fe-4S] cluster site is built by Cys20, Cys62, Cys65, Cys68, Cys214, Cys269, Cys456, and Cys460.

Belongs to the NARF family.

Component of the cytosolic Fe/S protein assembly machinery. Required for maturation of extramitochondrial Fe/S proteins. May play a role in the transfer of pre-assembled Fe/S clusters to target apoproteins. The sequence is that of Cytosolic Fe-S cluster assembly factor nar1 (nar1) from Talaromyces marneffei (strain ATCC 18224 / CBS 334.59 / QM 7333) (Penicillium marneffei).